A 315-amino-acid polypeptide reads, in one-letter code: Glutathione synthetase (315 aa).

Positions 125-310 (KLFTAWFSEF…ITGMLFDAIE (186 aa)) constitute an ATP-grasp domain. 151-207 (HQAKGDIILKPLDGMGGTSIFRVKQDDPNLGVIIETLTQYGNQYAMAQAFIPEITKG) is a binding site for ATP. The Mg(2+) site is built by E281 and N283.

It belongs to the prokaryotic GSH synthase family. Mg(2+) is required as a cofactor. Mn(2+) serves as cofactor.

It carries out the reaction gamma-L-glutamyl-L-cysteine + glycine + ATP = glutathione + ADP + phosphate + H(+). It participates in sulfur metabolism; glutathione biosynthesis; glutathione from L-cysteine and L-glutamate: step 2/2. This Shewanella oneidensis (strain ATCC 700550 / JCM 31522 / CIP 106686 / LMG 19005 / NCIMB 14063 / MR-1) protein is Glutathione synthetase.